Reading from the N-terminus, the 323-residue chain is o-succinylbenzoate synthase (323 aa).

Lys134 serves as the catalytic Proton donor. Positions 162, 191, and 214 each coordinate Mg(2+). Catalysis depends on Lys236, which acts as the Proton acceptor.

It belongs to the mandelate racemase/muconate lactonizing enzyme family. MenC type 1 subfamily. A divalent metal cation is required as a cofactor.

It carries out the reaction (1R,6R)-6-hydroxy-2-succinyl-cyclohexa-2,4-diene-1-carboxylate = 2-succinylbenzoate + H2O. It participates in quinol/quinone metabolism; 1,4-dihydroxy-2-naphthoate biosynthesis; 1,4-dihydroxy-2-naphthoate from chorismate: step 4/7. Its pathway is quinol/quinone metabolism; menaquinone biosynthesis. Functionally, converts 2-succinyl-6-hydroxy-2,4-cyclohexadiene-1-carboxylate (SHCHC) to 2-succinylbenzoate (OSB). The chain is o-succinylbenzoate synthase from Photorhabdus laumondii subsp. laumondii (strain DSM 15139 / CIP 105565 / TT01) (Photorhabdus luminescens subsp. laumondii).